The sequence spans 154 residues: Terephthalate 1,2-dioxygenase, terminal oxygenase component subunit beta 1 (154 aa).

This sequence belongs to the bacterial ring-hydroxylating dioxygenase beta subunit family. In terms of assembly, heterotetramer composed of 2 alpha (TphA2I and TphA2II) and 2 beta (TphA3I and TphA3II) subunits. Part of a multicomponent enzyme system composed of a reductase (TphA1I or TphA1II) and a two-subunit oxygenase component (TphA2I or TphA2II and TphA3I or TphA3II). The cofactor is Fe cation.

The enzyme catalyses terephthalate + NADH + O2 + H(+) = (3S,4R)-3,4-dihydroxycyclohexa-1,5-diene-1,4-dicarboxylate + NAD(+). Its activity is regulated as follows. Inhibited by EDTA. Component of the terephthalate 1,2-dioxygenase multicomponent enzyme system which catalyzes the dioxygenation of terephthalate (TER/TPA) to 1,2-dihydroxy-3,5-cyclohexadiene-1,4-dicarboxylic acid (DCD). It can also use 2,5-dicarboxypyridine (PDC) and 1,4-napthalenedicarboxylic acid (NDC) as substrates, and preferentially uses NADPH which is the physiological electron donor. In Comamonas sp, this protein is Terephthalate 1,2-dioxygenase, terminal oxygenase component subunit beta 1 (tphA3I).